The chain runs to 628 residues: Basal cell adhesion molecule (628 aa).

The N-terminal stretch at 1–31 (MEPPDARAGARRAPRLLVLALLLAAPPGSKA) is a signal peptide. 2 consecutive Ig-like V-type domains span residues 32–142 (EVRL…ARLK) and 150–253 (PEVS…RLDG). The Extracellular portion of the chain corresponds to 32 to 547 (EVRLSVPPLV…GTVAPQTSQA (516 aa)). Disulfide bonds link C53-C125, C172-C237, and C291-C337. 3 Ig-like C2-type domains span residues 254-355 (PSFS…KTLE), 355-441 (ELRV…RSFR), and 448-538 (PELK…FHFG). 3 N-linked (GlcNAc...) asparagine glycosylation sites follow: N321, N330, and N378. Disulfide bonds link C384-C424 and C473-C522. The chain crosses the membrane as a helical span at residues 548–568 (GVAVMAVAISVALLLLVVAVF). Topologically, residues 569-628 (YCMRRKGRPGCCQWGEKGSPPPGEPKLSHSGSQRPEQTGLLMGSASGGAKHGSGGFGDEC) are cytoplasmic. Residues 580 to 628 (CQWGEKGSPPPGEPKLSHSGSQRPEQTGLLMGSASGGAKHGSGGFGDEC) form a disordered region. A phosphoserine mark is found at S596, S598, S600, and S621. A compositionally biased stretch (gly residues) spans 613–628 (ASGGAKHGSGGFGDEC).

As to quaternary structure, homodimer. Interacts with ITGA4:ITGB1. Interacts with spectrins SPTA1 and SPTB1. In terms of processing, epinephrine-stimulated phosphorylation of Ser-621 by PKA enhances adhesion to laminin. Ser-621 can also be phosphorylated by AKT1.

Its subcellular location is the cell membrane. Its function is as follows. Transmembrane glycoprotein that functions as both a receptor and an adhesion molecule playing a crucial role in cell adhesion, motility, migration and invasion. Extracellular domain enables binding to extracellular matrix proteins, such as laminin, integrin and other ligands while its intracellular domain interacts with cytoskeletal proteins like hemoglobin, facilitating cell signal transduction. Serves as a receptor for laminin alpha-5/LAMA5 to promote cell adhesion. Mechanistically, JAK2 induces BCAM phosphorylation and activates its adhesion to laminin by stimulating a Rap1/AKT signaling pathway in the absence of EPOR. The polypeptide is Basal cell adhesion molecule (BCAM) (Bos taurus (Bovine)).